The following is a 525-amino-acid chain: MSEAEYLTQEDFLQRSNKLQEISDLGINPYPYEFPGTSSVEEIKQEYASQTLGNSEDATNKKTPKVKISGRMVLFRSMGKNAFAQILDNDQKIQVMFNRDFSSVAGLPEDAEISPIKFIEKKLDLGDILGIEGYLFFTHSGELTILVETVTLLCKALISLPDKHAGLSDKEIRYRKRWLDLISSDEVRQTFFKRSRIIKLIRQYMDAQGFMEVETPILQNIYGGAEATPFVTTLNALHSEVFLRISLEIALKKILVGGTSRVYEIGKVFRNEGIDRTHNPEFTMIEAYAANVDYHSVMTYVENLVEYLVCALNDGSTVLTYSHLKQGPQTVDFKAPWIRMTMKDSIKTYGDVDVDLHADHELRNILKERTSLPEESYATAPRGLLITALFDELVCDKLIAPHHITDHPIETTPLCKSLRSGDADFVERFESFCLGKELCNAYSELNDPLHQRMLLEKQMEKKALDPDSEYHPIDEEFLEALCQGMPPAGGFGIGIDRLVMILTDAASIRDVLYFPAMRRLESENN.

2 residues coordinate Mg(2+): Glu430 and Glu437.

Belongs to the class-II aminoacyl-tRNA synthetase family. Homodimer. Mg(2+) is required as a cofactor.

It is found in the cytoplasm. The enzyme catalyses tRNA(Lys) + L-lysine + ATP = L-lysyl-tRNA(Lys) + AMP + diphosphate. This Chlamydia caviae (strain ATCC VR-813 / DSM 19441 / 03DC25 / GPIC) (Chlamydophila caviae) protein is Lysine--tRNA ligase.